Here is a 111-residue protein sequence, read N- to C-terminus: Colipase (111 aa).

Residues 1-17 (MEKVLALVLLTLAVAYA) form the signal peptide. The propeptide at 18–22 (APDPR) is enterostatin, activation peptide. Cystine bridges form between cysteine 34–cysteine 45, cysteine 40–cysteine 56, cysteine 44–cysteine 78, cysteine 66–cysteine 86, and cysteine 80–cysteine 104.

This sequence belongs to the colipase family. Forms a 1:1 stoichiometric complex with pancreatic lipase. Expressed by the pancreas.

It is found in the secreted. Functionally, colipase is a cofactor of pancreatic lipase. It allows the lipase to anchor itself to the lipid-water interface. Without colipase the enzyme is washed off by bile salts, which have an inhibitory effect on the lipase. Its function is as follows. Enterostatin has a biological activity as a satiety signal. This Myocastor coypus (Coypu) protein is Colipase (CLPS).